The chain runs to 356 residues: Dual-specificity RNA methyltransferase RlmN (356 aa).

Catalysis depends on Glu89, which acts as the Proton acceptor. The Radical SAM core domain occupies 108-341; sequence SHARYTICVS…CTIRESKGLD (234 aa). A disulfide bridge links Cys115 with Cys346. 3 residues coordinate [4Fe-4S] cluster: Cys122, Cys126, and Cys129. Residues 172 to 173, Ser204, 227 to 229, and Asn303 each bind S-adenosyl-L-methionine; these read GE and SLH. Catalysis depends on Cys346, which acts as the S-methylcysteine intermediate.

It belongs to the radical SAM superfamily. RlmN family. Requires [4Fe-4S] cluster as cofactor.

The protein localises to the cytoplasm. The catalysed reaction is adenosine(2503) in 23S rRNA + 2 reduced [2Fe-2S]-[ferredoxin] + 2 S-adenosyl-L-methionine = 2-methyladenosine(2503) in 23S rRNA + 5'-deoxyadenosine + L-methionine + 2 oxidized [2Fe-2S]-[ferredoxin] + S-adenosyl-L-homocysteine. It carries out the reaction adenosine(37) in tRNA + 2 reduced [2Fe-2S]-[ferredoxin] + 2 S-adenosyl-L-methionine = 2-methyladenosine(37) in tRNA + 5'-deoxyadenosine + L-methionine + 2 oxidized [2Fe-2S]-[ferredoxin] + S-adenosyl-L-homocysteine. Functionally, specifically methylates position 2 of adenine 2503 in 23S rRNA and position 2 of adenine 37 in tRNAs. m2A2503 modification seems to play a crucial role in the proofreading step occurring at the peptidyl transferase center and thus would serve to optimize ribosomal fidelity. The sequence is that of Dual-specificity RNA methyltransferase RlmN from Campylobacter jejuni subsp. jejuni serotype O:2 (strain ATCC 700819 / NCTC 11168).